The chain runs to 611 residues: Serine/arginine repetitive matrix protein 4 (611 aa).

2 disordered regions span residues A38–M248 and S263–R611. Composition is skewed to basic residues over residues R107 to S123 and V131 to P189. The span at S190–C202 shows a compositional bias: low complexity. The span at E203–K216 shows a compositional bias: basic and acidic residues. Residues S217–S226 are compositionally biased toward basic residues. A compositionally biased stretch (polar residues) spans K270 to D290. Positions T291–S301 are enriched in low complexity. Residues L322–N341 are compositionally biased toward polar residues. 2 stretches are compositionally biased toward low complexity: residues S390–T422 and S430–S461. The span at P462–R482 shows a compositional bias: basic and acidic residues. Over residues A483–R498 the composition is skewed to basic residues. Residues D499–R508 are compositionally biased toward basic and acidic residues. The segment covering P522–Y549 has biased composition (low complexity). Over residues S550–T564 the composition is skewed to basic residues. The segment covering R565–R580 has biased composition (low complexity). Basic residues predominate over residues S581–S595. The segment covering Q596 to R611 has biased composition (low complexity).

This sequence belongs to the nSR100 family. Phosphorylated. Specifically expressed in neuronal cells (at protein level). Expressed in the cerebellum.

The protein resides in the nucleus. Its function is as follows. Splicing factor specifically required for neural cell differentiation. Acts in conjunction with nPTB/PTBP2 by binding directly to its regulated target transcripts and promotes neural-specific exon inclusion in many genes that function in neural cell differentiation. Required to promote the inclusion of neural-specific exon 10 in nPTB/PTBP2, leading to increased expression of neural-specific nPTB/PTBP2. Also promotes the inclusion of exon 16 in DAAM1 in neuron extracts. Promotes alternative splicing of REST transcripts to produce REST isoform 3 (REST4) with greatly reduced repressive activity, thereby activating expression of REST targets in neural cells. Plays an important role during embryonic development as well as in the proper functioning of the adult nervous system. Regulates alternative splicing events in genes with important neuronal functions. This chain is Serine/arginine repetitive matrix protein 4 (SRRM4), found in Homo sapiens (Human).